We begin with the raw amino-acid sequence, 446 residues long: Mitochondrial ribonuclease P protein 1 homolog (446 aa).

The N-terminal 24 residues, 1-24 (MLKHFARWRLGSQLLKGCAAPVRQ), are a transit peptide targeting the mitochondrion. Residues 41–67 (PQKKFVNPFSQPAPALSNDTISENKEE) are disordered. Residues S50 and S57 each carry the phosphoserine modification. Phosphothreonine is present on T60. S62 carries the phosphoserine modification. Residues 119 to 158 (LWQIEMKKEADQRKKAERAKEAERRVAEMRKEREENTHII) adopt a coiled-coil conformation. Positions 179-373 (QNNRLTRAMQ…KHVPRRKVVQ (195 aa)) constitute an SAM-dependent MTase TRM10-type domain.

The protein belongs to the class IV-like SAM-binding methyltransferase superfamily. TRM10 family. As to quaternary structure, component of mitochondrial ribonuclease P, a complex composed of rswl/MRPP1, scu/MRPP2 and mldr/MRPP3.

It localises to the mitochondrion. Its function is as follows. Mitochondrial tRNA N1-methyltransferase involved in mitochondrial tRNA maturation. Component of mitochondrial ribonuclease P, a complex composed of rswl/MRPP1, scu/MRPP2 and mldr/MRPP3., which cleaves tRNA molecules in their 5'-ends. Essential for the structural and functional integrity of mitochondria. Function is essential for pupal development. This chain is Mitochondrial ribonuclease P protein 1 homolog, found in Drosophila melanogaster (Fruit fly).